A 233-amino-acid chain; its full sequence is Movement and silencing protein TGBp1 (233 aa).

A (+)RNA virus helicase ATP-binding domain is found at 1 to 133 (MNHFINLLVA…CKLLSSLGIK (133 aa)). The region spanning 134 to 233 (VESHRRDRDV…EFPHTTSRPQ (100 aa)) is the (+)RNA virus helicase C-terminal domain.

The protein belongs to the Tymovirales TGBp1 protein family. As to quaternary structure, homodimer and homooligomer. Interacts with capsid protein. Interacts with host AGO1; this interaction targets the host protein for degradation, thereby suppressing the antiviral RNA silencing.

Its subcellular location is the host cytoplasm. Functionally, transports viral genome to neighboring plant cells directly through plasmosdesmata, without any budding. The movement protein allows efficient cell to cell propagation, by bypassing the host cell wall barrier. Increases plasmodesma size exclusion limit. Acts as a suppressor of RNA-mediated gene silencing, also known as post-transcriptional gene silencing (PTGS), a mechanism of plant viral defense that limits the accumulation of viral RNAs. This is Movement and silencing protein TGBp1 from Carica papaya (Papaya).